A 297-amino-acid chain; its full sequence is Coiled-coil domain-containing protein 159 (297 aa).

Residues 147-297 (EELELVREEV…SKSGRSFPPA (151 aa)) adopt a coiled-coil conformation. The segment at 256-297 (LRGHKGHQCLSPPLPSWDSDSDCDQDLSQPPFSKSGRSFPPA) is disordered.

Interacts with DYNLT2. Interacts with GGNBP1. Interacts with OSBP2.

Its function is as follows. Functions during spermatid development; may participate in the centrosome reduction procedure of spermatids and is required for the formation of the connecting piece/sperm head-tail coupling apparatus (HTCA) and the correct and tight attachment of the flagellum to the nuclear envelope. In Homo sapiens (Human), this protein is Coiled-coil domain-containing protein 159 (CCDC159).